The following is a 147-amino-acid chain: MVNLTAAEKTQVTNLWGKVNVKELGGEALSRLLVVYPWTRRFFEHFGDLSTAEAVLHNAKVLAHGEKVLTSFGEGLKHLDNLKGTFADLSELHCDKLHVDPENFRLLGNVLVIVLARHFGKEFTPDVQAAYEKVVAGVANALAHKYH.

In terms of domain architecture, Globin spans 3 to 147 (NLTAAEKTQV…VANALAHKYH (145 aa)). Positions 64 and 93 each coordinate heme b.

The protein belongs to the globin family. In terms of assembly, heterotetramer of two delta chains and two alpha chains. As to expression, red blood cells.

The protein is Hemoglobin subunit delta (HBD) of Loxodonta africana (African elephant).